The following is a 166-amino-acid chain: Deoxyuridine 5'-triphosphate nucleotidohydrolase (166 aa).

The disordered stretch occupies residues 1–24; the sequence is MACVNEPSPKLQKLDRNGIHGDSS. Residue E138 participates in Mg(2+) binding.

It belongs to the dUTPase family. Homotrimer. The cofactor is Mg(2+).

The catalysed reaction is dUTP + H2O = dUMP + diphosphate + H(+). It participates in pyrimidine metabolism; dUMP biosynthesis; dUMP from dCTP (dUTP route): step 2/2. Functionally, this enzyme is involved in nucleotide metabolism: it produces dUMP, the immediate precursor of thymidine nucleotides and it decreases the intracellular concentration of dUTP, preventing uracil incorporation into DNA. This chain is Deoxyuridine 5'-triphosphate nucleotidohydrolase (DUT), found in Arabidopsis thaliana (Mouse-ear cress).